A 1405-amino-acid polypeptide reads, in one-letter code: DNA-directed RNA polymerase subunit beta' (1405 aa).

4 residues coordinate Zn(2+): Cys-70, Cys-72, Cys-85, and Cys-88. Mg(2+)-binding residues include Asp-460, Asp-462, and Asp-464. 4 residues coordinate Zn(2+): Cys-814, Cys-888, Cys-895, and Cys-898.

This sequence belongs to the RNA polymerase beta' chain family. In terms of assembly, the RNAP catalytic core consists of 2 alpha, 1 beta, 1 beta' and 1 omega subunit. When a sigma factor is associated with the core the holoenzyme is formed, which can initiate transcription. Requires Mg(2+) as cofactor. Zn(2+) is required as a cofactor.

The enzyme catalyses RNA(n) + a ribonucleoside 5'-triphosphate = RNA(n+1) + diphosphate. Functionally, DNA-dependent RNA polymerase catalyzes the transcription of DNA into RNA using the four ribonucleoside triphosphates as substrates. The chain is DNA-directed RNA polymerase subunit beta' from Shewanella putrefaciens (strain CN-32 / ATCC BAA-453).